A 332-amino-acid chain; its full sequence is DNA-directed RNA polymerase subunit alpha (332 aa).

Residues 1 to 234 form an alpha N-terminal domain (alpha-NTD) region; it reads MTVTANQVLR…DQLSVFGDFT (234 aa). The alpha C-terminal domain (alpha-CTD) stretch occupies residues 248 to 332; that stretch reads VDPVLLRPID…AGVASHGMLG (85 aa).

This sequence belongs to the RNA polymerase alpha chain family. In terms of assembly, homodimer. The RNAP catalytic core consists of 2 alpha, 1 beta, 1 beta' and 1 omega subunit. When a sigma factor is associated with the core the holoenzyme is formed, which can initiate transcription.

It carries out the reaction RNA(n) + a ribonucleoside 5'-triphosphate = RNA(n+1) + diphosphate. Its function is as follows. DNA-dependent RNA polymerase catalyzes the transcription of DNA into RNA using the four ribonucleoside triphosphates as substrates. In Stenotrophomonas maltophilia (strain K279a), this protein is DNA-directed RNA polymerase subunit alpha.